We begin with the raw amino-acid sequence, 193 residues long: Resuscitation-promoting factor Rpf1 (193 aa).

A signal peptide spans 1 to 35; it reads MGRHSTKTSSAFTKLAASTIAFGAAATIMAPSASA.

The protein belongs to the transglycosylase family. Rpf subfamily.

The protein localises to the secreted. Factor that stimulates resuscitation of dormant cells. Has peptidoglycan (PG) hydrolytic activity. Active in the pM concentration range. Has little to no effect on actively-growing cells. PG fragments could either directly activate the resuscitation pathway of dormant bacteria or serve as a substrate for endogenous Rpf, resulting in low molecular weight products with resuscitation activity. The sequence is that of Resuscitation-promoting factor Rpf1 (rpf1) from Corynebacterium glutamicum (strain ATCC 13032 / DSM 20300 / JCM 1318 / BCRC 11384 / CCUG 27702 / LMG 3730 / NBRC 12168 / NCIMB 10025 / NRRL B-2784 / 534).